A 1000-amino-acid chain; its full sequence is Chloride channel protein D (1000 aa).

Low complexity-rich tracts occupy residues 1 to 16 (MSSG…NDGN) and 38 to 60 (NNNN…NSSV). Positions 1–90 (MSSGNPFDNG…SYDDDGDDEE (90 aa)) are disordered. At 1–256 (MSSGNPFDNG…LASDHEVLRW (256 aa)) the chain is on the cytoplasmic side. Over residues 71–80 (RIQEEERLTE) the composition is skewed to basic and acidic residues. Transmembrane regions (helical) follow at residues 257 to 277 (IVSL…HACV), 290 to 310 (AVLE…NTLL), 416 to 436 (GAGA…LFSL), 442 to 462 (FWSI…TYTM), 493 to 513 (IIPF…FTWI), 534 to 554 (LEVF…PLFF), 678 to 698 (LGLW…AYTA), 710 to 730 (MLVI…HILG), 733 to 753 (VSID…GGVS), and 772 to 792 (YLLP…ALIH). CBS domains are found at residues 824–881 (MAKK…ISDV) and 926–984 (MNLT…YREL).

The protein belongs to the chloride channel (TC 2.A.49) family.

It localises to the membrane. Voltage-gated chloride channel. Chloride channels may have several functions including the regulation of cell volume, membrane potential stabilization and signal transduction. Required for normal aggregation. This is Chloride channel protein D (clcD) from Dictyostelium discoideum (Social amoeba).